A 276-amino-acid chain; its full sequence is Small ribosomal subunit protein uS5w (276 aa).

The span at 1 to 15 (MAERGVERGGDRGDF) shows a compositional bias: basic and acidic residues. The interval 1 to 42 (MAERGVERGGDRGDFGRGFGGRGGGRGGPRGRGRRAGRAPEE) is disordered. A compositionally biased stretch (gly residues) spans 16–28 (GRGFGGRGGGRGG). One can recognise an S5 DRBM domain in the interval 87-150 (LKDEVMKIMP…ILAKLSVVPI (64 aa)).

It belongs to the universal ribosomal protein uS5 family.

The protein is Small ribosomal subunit protein uS5w (RPS2D) of Arabidopsis thaliana (Mouse-ear cress).